Reading from the N-terminus, the 122-residue chain is Large ribosomal subunit protein uL22 (122 aa).

Residues 102–122 (VAEGKEMKSSKSHKKNQAEGK) are disordered.

It belongs to the universal ribosomal protein uL22 family. As to quaternary structure, part of the 50S ribosomal subunit.

In terms of biological role, this protein binds specifically to 23S rRNA; its binding is stimulated by other ribosomal proteins, e.g. L4, L17, and L20. It is important during the early stages of 50S assembly. It makes multiple contacts with different domains of the 23S rRNA in the assembled 50S subunit and ribosome. Its function is as follows. The globular domain of the protein is located near the polypeptide exit tunnel on the outside of the subunit, while an extended beta-hairpin is found that lines the wall of the exit tunnel in the center of the 70S ribosome. In Helicobacter pylori (strain G27), this protein is Large ribosomal subunit protein uL22.